Here is a 317-residue protein sequence, read N- to C-terminus: GTPase Era (317 aa).

Residues 23–190 (RSGFVALIGP…MDYLVETLPE (168 aa)) form the Era-type G domain. The G1 stretch occupies residues 31-38 (GPTNAGKS). 31 to 38 (GPTNAGKS) is a GTP binding site. The tract at residues 57-61 (QTTRA) is G2. The G3 stretch occupies residues 78 to 81 (DTPG). GTP-binding positions include 78–82 (DTPGI) and 140–143 (NKID). Positions 140–143 (NKID) are G4. Residues 169-171 (ISA) form a G5 region. The KH type-2 domain maps to 221-298 (LHQELPYASH…HLFLFVKVRE (78 aa)).

Belongs to the TRAFAC class TrmE-Era-EngA-EngB-Septin-like GTPase superfamily. Era GTPase family. In terms of assembly, monomer.

The protein localises to the cytoplasm. It localises to the cell inner membrane. Its function is as follows. An essential GTPase that binds both GDP and GTP, with rapid nucleotide exchange. Plays a role in 16S rRNA processing and 30S ribosomal subunit biogenesis and possibly also in cell cycle regulation and energy metabolism. The protein is GTPase Era of Agrobacterium fabrum (strain C58 / ATCC 33970) (Agrobacterium tumefaciens (strain C58)).